Consider the following 299-residue polypeptide: Leucine zipper transcription factor-like protein 1 (299 aa).

The interaction with BSS9 stretch occupies residues 145–299; the sequence is GTTELLNKEI…KRLAKYESED (155 aa). Positions 145-299 form a coiled coil; the sequence is GTTELLNKEI…KRLAKYESED (155 aa).

Belongs to the LZTFL1 family. Self-associates. Interacts with BBS9; the interaction mediates the association of LZTL1 with the BBsome complex and regulates BBSome ciliary trafficking.

The protein localises to the cytoplasm. Regulates ciliary localization of the BBSome complex. Together with the BBSome complex, controls SMO ciliary trafficking and contributes to the sonic hedgehog (SHH) pathway regulation. May play a role in neurite outgrowth. May have tumor suppressor function. This chain is Leucine zipper transcription factor-like protein 1 (Lztfl1), found in Rattus norvegicus (Rat).